Consider the following 254-residue polypeptide: Allene oxide cyclase 1, chloroplastic (254 aa).

The N-terminal 78 residues, 1-78 (MASSTISLQS…QNLGNTENPR (78 aa)), are a transit peptide targeting the chloroplast. Positions 44–56 (SNGPGSSSPTSFT) are enriched in low complexity. Positions 44–79 (SNGPGSSSPTSFTPKKKLTPTRALSQNLGNTENPRP) are disordered. A compositionally biased stretch (polar residues) spans 65–77 (RALSQNLGNTENP).

The protein belongs to the allene oxide cyclase family. In terms of tissue distribution, highly expressed in fully developed leaves.

It localises to the plastid. The protein localises to the chloroplast. The enzyme catalyses (9Z,13S,15Z)-12,13-epoxyoctadeca-9,11,15-trienoate = (9S,13S,15Z)-12-oxophyto-10,15-dienoate. Functionally, involved in the production of 12-oxo-phytodienoic acid (OPDA), a precursor of jasmonic acid. The sequence is that of Allene oxide cyclase 1, chloroplastic (AOC1) from Arabidopsis thaliana (Mouse-ear cress).